Consider the following 299-residue polypeptide: Acetyl-coenzyme A carboxylase carboxyl transferase subunit beta (299 aa).

Residues 25 to 294 enclose the CoA carboxyltransferase N-terminal domain; sequence VWTKCTSCEQ…PFVEPELIQE (270 aa). Residues Cys29, Cys32, Cys48, and Cys51 each coordinate Zn(2+). A C4-type zinc finger spans residues 29–51; it reads CTSCEQVLYRDELKRHLEVCPKC.

The protein belongs to the AccD/PCCB family. In terms of assembly, acetyl-CoA carboxylase is a heterohexamer composed of biotin carboxyl carrier protein (AccB), biotin carboxylase (AccC) and two subunits each of ACCase subunit alpha (AccA) and ACCase subunit beta (AccD). Requires Zn(2+) as cofactor.

It localises to the cytoplasm. The enzyme catalyses N(6)-carboxybiotinyl-L-lysyl-[protein] + acetyl-CoA = N(6)-biotinyl-L-lysyl-[protein] + malonyl-CoA. Its pathway is lipid metabolism; malonyl-CoA biosynthesis; malonyl-CoA from acetyl-CoA: step 1/1. Component of the acetyl coenzyme A carboxylase (ACC) complex. Biotin carboxylase (BC) catalyzes the carboxylation of biotin on its carrier protein (BCCP) and then the CO(2) group is transferred by the transcarboxylase to acetyl-CoA to form malonyl-CoA. In Histophilus somni (strain 129Pt) (Haemophilus somnus), this protein is Acetyl-coenzyme A carboxylase carboxyl transferase subunit beta.